A 110-amino-acid chain; its full sequence is Protein RALF-like 4 (110 aa).

An N-terminal signal peptide occupies residues 1-23; sequence MGVKMLLIFGLLILAMVAKSVNA. Positions 24-58 are cleaved as a propeptide — removed in mature form; the sequence is TYPLTKSCINGQGCIGEDDELESLMDSETNRRQLA. Cystine bridges form between Cys76/Cys86 and Cys99/Cys105.

Belongs to the plant rapid alkalinization factor (RALF) family. Post-translationally, proteolytically cleaved, probably by S1P, a subtilisin-like serine protease (subtilase).

Its subcellular location is the secreted. In terms of biological role, cell signaling peptide that may regulate plant stress, growth, and development. Mediates a rapid alkalinization of extracellular space by mediating a transient increase in the cytoplasmic Ca(2+) concentration leading to a calcium-dependent signaling events through a cell surface receptor and a concomitant activation of some intracellular mitogen-activated protein kinases. The chain is Protein RALF-like 4 (RALFL4) from Arabidopsis thaliana (Mouse-ear cress).